The chain runs to 441 residues: Capsid vertex component 1 (441 aa).

The protein belongs to the herpesviridae CVC1 protein family. Interacts (via C-terminus) with capsid vertex component 2/CVC2.

The protein resides in the virion. It localises to the host nucleus. Functionally, capsid vertex-specific component that plays a role during viral DNA encapsidation, assuring correct genome cleavage and presumably stabilizing capsids that contain full-length viral genomes. This chain is Capsid vertex component 1, found in Saimiriine herpesvirus 2 (strain 11) (SaHV-2).